The chain runs to 239 residues: Nicotinamide riboside transporter PnuC (239 aa).

Over 1–21 the chain is Cytoplasmic; sequence MDFFSVQNILVHIPIGAGGYD. Residues 22-42 traverse the membrane as a helical segment; it reads LSWIEAVGTIAGLLCIGLASL. At 43–48 the chain is on the periplasmic side; it reads EKISNY. A helical transmembrane segment spans residues 49–68; sequence FFGLINVTLFGIIFFQIQLY. The Cytoplasmic segment spans residues 69 to 71; sequence ASL. A helical transmembrane segment spans residues 72-89; it reads LLQVFFFAANIYGWYAWS. The Periplasmic portion of the chain corresponds to 90–109; sequence RQTSQNEAELKIRWLPLPKA. A helical membrane pass occupies residues 110–127; it reads LSWLAVCVVSIGLMTVFI. The Cytoplasmic segment spans residues 128 to 157; it reads NPVFAFLTRVAVMIMQALGLQVVMPELQPD. A helical membrane pass occupies residues 158–177; the sequence is AFPFWDSCMMVLSIVAMILM. Topologically, residues 178–183 are periplasmic; sequence TRKYVE. Residues 184–206 traverse the membrane as a helical segment; sequence NWLLWVIINVISVVIFALQGVYA. Beta-nicotinamide D-riboside is bound by residues W188 and N192. The Cytoplasmic portion of the chain corresponds to 207–239; sequence MSLEYIILTFIALNGSRMWINSARERGSRALSH.

The protein belongs to the nicotinamide ribonucleoside (NR) uptake permease (TC 4.B.1) family.

The protein resides in the cell inner membrane. Required for nicotinamide riboside transport across the inner membrane. The protein is Nicotinamide riboside transporter PnuC (pnuC) of Escherichia coli (strain K12).